The primary structure comprises 614 residues: Pentatricopeptide repeat-containing protein At1g63080, mitochondrial (614 aa).

The transit peptide at 1 to 7 (MSLAKRF) directs the protein to the mitochondrion. PPR repeat units follow at residues 64 to 98 (SIVEFSKLLSAIAKMKKFDLVISFGEKMEILGVSH), 99 to 133 (NLYTYNIMINCLCRRSQLSFALAILGKMMKLGYGP), 134 to 168 (SIVTLNSLLNGFCHGNRISEAVALVDQMVEMGYQP), 169 to 203 (DTVTFTTLVHGLFQHNKASEAVALVERMVVKGCQP), 204 to 238 (DLVTYGAVINGLCKRGEPDLALNLLNKMEKGKIEA), 239 to 273 (DVVIYSTVIDSLCKYRHVDDALNLFTEMDNKGIRP), 274 to 308 (DVFTYSSLISCLCNYGRWSDASRLLSDMLERKINP), 309 to 343 (NVVTFNSLIDAFAKEGKLIEAEKLFDEMIQRSIDP), 344 to 378 (NIVTYNSLINGFCMHDRLDEAQQIFTLMVSKDCLP), 379 to 413 (DVVTYNTLINGFCKAKKVVDGMELFRDMSRRGLVG), 414 to 448 (NTVTYTTLIHGFFQASDCDNAQMVFKQMVSDGVHP), 449 to 483 (NIMTYNTLLDGLCKNGKLEKAMVVFEYLQKSKMEP), 484 to 518 (DIYTYNIMSEGMCKAGKVEDGWDLFCSLSLKGVKP), 519 to 553 (DVIAYNTMISGFCKKGLKEEAYTLFIKMKEDGPLP), and 554 to 588 (DSGTYNTLIRAHLRDGDKAASAELIKEMRSCRFAG).

This sequence belongs to the PPR family. P subfamily.

Its subcellular location is the mitochondrion. This is Pentatricopeptide repeat-containing protein At1g63080, mitochondrial from Arabidopsis thaliana (Mouse-ear cress).